The chain runs to 235 residues: ATP-dependent Clp protease proteolytic subunit (235 aa).

The Nucleophile role is filled by S123. H148 is a catalytic residue.

The protein belongs to the peptidase S14 family. Fourteen ClpP subunits assemble into 2 heptameric rings which stack back to back to give a disk-like structure with a central cavity, resembling the structure of eukaryotic proteasomes.

It localises to the cytoplasm. It catalyses the reaction Hydrolysis of proteins to small peptides in the presence of ATP and magnesium. alpha-casein is the usual test substrate. In the absence of ATP, only oligopeptides shorter than five residues are hydrolyzed (such as succinyl-Leu-Tyr-|-NHMec, and Leu-Tyr-Leu-|-Tyr-Trp, in which cleavage of the -Tyr-|-Leu- and -Tyr-|-Trp bonds also occurs).. Functionally, cleaves peptides in various proteins in a process that requires ATP hydrolysis. Has a chymotrypsin-like activity. Plays a major role in the degradation of misfolded proteins. The polypeptide is ATP-dependent Clp protease proteolytic subunit (Novosphingobium aromaticivorans (strain ATCC 700278 / DSM 12444 / CCUG 56034 / CIP 105152 / NBRC 16084 / F199)).